Reading from the N-terminus, the 321-residue chain is Lipoyl synthase (321 aa).

Residues C68, C73, C79, C94, C98, C101, and S308 each coordinate [4Fe-4S] cluster. The Radical SAM core domain maps to 80–297 (FNHGTATFMI…KVLADELGFT (218 aa)).

The protein belongs to the radical SAM superfamily. Lipoyl synthase family. It depends on [4Fe-4S] cluster as a cofactor.

The protein localises to the cytoplasm. It carries out the reaction [[Fe-S] cluster scaffold protein carrying a second [4Fe-4S](2+) cluster] + N(6)-octanoyl-L-lysyl-[protein] + 2 oxidized [2Fe-2S]-[ferredoxin] + 2 S-adenosyl-L-methionine + 4 H(+) = [[Fe-S] cluster scaffold protein] + N(6)-[(R)-dihydrolipoyl]-L-lysyl-[protein] + 4 Fe(3+) + 2 hydrogen sulfide + 2 5'-deoxyadenosine + 2 L-methionine + 2 reduced [2Fe-2S]-[ferredoxin]. It participates in protein modification; protein lipoylation via endogenous pathway; protein N(6)-(lipoyl)lysine from octanoyl-[acyl-carrier-protein]: step 2/2. Its function is as follows. Catalyzes the radical-mediated insertion of two sulfur atoms into the C-6 and C-8 positions of the octanoyl moiety bound to the lipoyl domains of lipoate-dependent enzymes, thereby converting the octanoylated domains into lipoylated derivatives. This is Lipoyl synthase from Shewanella denitrificans (strain OS217 / ATCC BAA-1090 / DSM 15013).